Reading from the N-terminus, the 713-residue chain is Histone-lysine N-methyltransferase SETDB2 (713 aa).

The tract at residues P78 to N109 is disordered. The segment covering H87–N109 has biased composition (polar residues). The MBD domain maps to L161–Q233. The Pre-SET domain occupies D294–G367. Zn(2+) contacts are provided by C296, C298, C302, C308, C310, C348, C352, C354, and C359. The SET domain maps to V370–G688. K380–W382 contributes to the S-adenosyl-L-methionine binding site. 2 stretches are compositionally biased toward basic and acidic residues: residues E511 to L534 and T579 to E592. 2 disordered regions span residues E511–E549 and T579–E608. S-adenosyl-L-methionine is bound by residues R642 and N645–H646. Residues C648, C701, C703, and C708 each contribute to the Zn(2+) site.

The protein belongs to the class V-like SAM-binding methyltransferase superfamily.

It is found in the nucleus. It localises to the chromosome. It catalyses the reaction N(6),N(6)-dimethyl-L-lysyl(9)-[histone H3] + S-adenosyl-L-methionine = N(6),N(6),N(6)-trimethyl-L-lysyl(9)-[histone H3] + S-adenosyl-L-homocysteine + H(+). Its function is as follows. Histone methyltransferase involved in left-right axis specification in early development and mitosis. Specifically trimethylates 'Lys-9' of histone H3 (H3K9me3). H3K9me3 is a specific tag for epigenetic transcriptional repression that recruits HP1 (CBX1, CBX3 and/or CBX5) proteins to methylated histones. Contributes to H3K9me3 in both the interspersed repetitive elements and centromere-associated repeats. Plays a role in chromosome condensation and segregation during mitosis. The polypeptide is Histone-lysine N-methyltransferase SETDB2 (Setdb2) (Mus musculus (Mouse)).